The chain runs to 226 residues: PKHD-type hydroxylase Nwi_0701 (226 aa).

The Fe2OG dioxygenase domain maps to 78-178; sequence KVLPPRFNRY…RLAAFFWTQS (101 aa). His-96, Asp-98, and His-159 together coordinate Fe cation. Arg-169 serves as a coordination point for 2-oxoglutarate.

It depends on Fe(2+) as a cofactor. Requires L-ascorbate as cofactor.

In Nitrobacter winogradskyi (strain ATCC 25391 / DSM 10237 / CIP 104748 / NCIMB 11846 / Nb-255), this protein is PKHD-type hydroxylase Nwi_0701.